The sequence spans 58 residues: Large ribosomal subunit protein uL30 (58 aa).

This sequence belongs to the universal ribosomal protein uL30 family. As to quaternary structure, part of the 50S ribosomal subunit.

This chain is Large ribosomal subunit protein uL30, found in Pelobacter propionicus (strain DSM 2379 / NBRC 103807 / OttBd1).